The sequence spans 154 residues: Myoglobin (154 aa).

Residues 2 to 148 form the Globin domain; that stretch reads GLSDQEWQQV…FRNDMASKYK (147 aa). Nitrite is bound at residue His65. Residue His65 coordinates O2. His94 lines the heme b pocket.

Belongs to the globin family. As to quaternary structure, monomeric.

It localises to the cytoplasm. Its subcellular location is the sarcoplasm. The enzyme catalyses Fe(III)-heme b-[protein] + nitric oxide + H2O = Fe(II)-heme b-[protein] + nitrite + 2 H(+). It carries out the reaction H2O2 + AH2 = A + 2 H2O. Monomeric heme protein which primary function is to store oxygen and facilitate its diffusion within muscle tissues. Reversibly binds oxygen through a pentacoordinated heme iron and enables its timely and efficient release as needed during periods of heightened demand. Depending on the oxidative conditions of tissues and cells, and in addition to its ability to bind oxygen, it also has a nitrite reductase activity whereby it regulates the production of bioactive nitric oxide. Under stress conditions, like hypoxia and anoxia, it also protects cells against reactive oxygen species thanks to its pseudoperoxidase activity. This Aethia pygmaea (Whiskered auklet) protein is Myoglobin (MB).